The sequence spans 90 residues: Phosphocarrier protein NPr (90 aa).

The HPr domain occupies 2–90; that stretch reads TVKQTVEISN…ALFNAGFDED (89 aa). Catalysis depends on His-16, which acts as the Pros-phosphohistidine intermediate.

It belongs to the HPr family.

It localises to the cytoplasm. In terms of biological role, component of the phosphoenolpyruvate-dependent nitrogen-metabolic phosphotransferase system (nitrogen-metabolic PTS), that seems to be involved in regulating nitrogen metabolism. The phosphoryl group from phosphoenolpyruvate (PEP) is transferred to the phosphoryl carrier protein NPr by enzyme I-Ntr. Phospho-NPr then transfers it to EIIA-Ntr. Could function in the transcriptional regulation of sigma-54 dependent operons in conjunction with the NPr (PtsO) and EIIA-Ntr (PtsN) proteins. The protein is Phosphocarrier protein NPr (ptsO) of Klebsiella oxytoca.